The following is a 242-amino-acid chain: Biosynthetic peptidoglycan transglycosylase (242 aa).

A helical membrane pass occupies residues isoleucine 19 to valine 39.

The protein belongs to the glycosyltransferase 51 family.

Its subcellular location is the cell inner membrane. It carries out the reaction [GlcNAc-(1-&gt;4)-Mur2Ac(oyl-L-Ala-gamma-D-Glu-L-Lys-D-Ala-D-Ala)](n)-di-trans,octa-cis-undecaprenyl diphosphate + beta-D-GlcNAc-(1-&gt;4)-Mur2Ac(oyl-L-Ala-gamma-D-Glu-L-Lys-D-Ala-D-Ala)-di-trans,octa-cis-undecaprenyl diphosphate = [GlcNAc-(1-&gt;4)-Mur2Ac(oyl-L-Ala-gamma-D-Glu-L-Lys-D-Ala-D-Ala)](n+1)-di-trans,octa-cis-undecaprenyl diphosphate + di-trans,octa-cis-undecaprenyl diphosphate + H(+). The protein operates within cell wall biogenesis; peptidoglycan biosynthesis. Peptidoglycan polymerase that catalyzes glycan chain elongation from lipid-linked precursors. This chain is Biosynthetic peptidoglycan transglycosylase, found in Salmonella agona (strain SL483).